A 483-amino-acid polypeptide reads, in one-letter code: Replication factor C large subunit (483 aa).

43–50 (GKPGIGKT) is a binding site for ATP. Basic and acidic residues predominate over residues 417-442 (ELKKKKKEEDAKGKKARGSKKEKEPI). Positions 417–483 (ELKKKKKEED…KSSQSTLFSF (67 aa)) are disordered. Residues 448-457 (SIDSFSSQEP) show a composition bias toward polar residues.

Belongs to the activator 1 small subunits family. RfcL subfamily. As to quaternary structure, heteromultimer composed of small subunits (RfcS) and large subunits (RfcL).

In terms of biological role, part of the RFC clamp loader complex which loads the PCNA sliding clamp onto DNA. The chain is Replication factor C large subunit from Methanospirillum hungatei JF-1 (strain ATCC 27890 / DSM 864 / NBRC 100397 / JF-1).